A 384-amino-acid chain; its full sequence is Mannitol-1-phosphate 5-dehydrogenase (384 aa).

3–14 is a binding site for NAD(+); it reads AVHFGAGNIGRG.

It belongs to the mannitol dehydrogenase family.

The enzyme catalyses D-mannitol 1-phosphate + NAD(+) = beta-D-fructose 6-phosphate + NADH + H(+). This chain is Mannitol-1-phosphate 5-dehydrogenase, found in Arthrobacter sp. (strain FB24).